The following is a 135-amino-acid chain: Fatty acid-binding protein homolog 6 (135 aa).

Residues R110 and 130–132 each bind a fatty acid; that span reads REY.

The protein belongs to the calycin superfamily. Fatty-acid binding protein (FABP) family.

The protein is Fatty acid-binding protein homolog 6 (lbp-6) of Caenorhabditis elegans.